The chain runs to 469 residues: Adenosylhomocysteinase (469 aa).

3 residues coordinate substrate: threonine 58, aspartate 133, and glutamate 195. 196–198 (TTT) lines the NAD(+) pocket. Substrate is bound by residues lysine 225 and aspartate 229. Residues asparagine 230, 259 to 264 (GFGDVG), glutamate 282, asparagine 317, 338 to 340 (IGH), and asparagine 383 contribute to the NAD(+) site.

This sequence belongs to the adenosylhomocysteinase family. It depends on NAD(+) as a cofactor.

The protein localises to the cytoplasm. The catalysed reaction is S-adenosyl-L-homocysteine + H2O = L-homocysteine + adenosine. It functions in the pathway amino-acid biosynthesis; L-homocysteine biosynthesis; L-homocysteine from S-adenosyl-L-homocysteine: step 1/1. Its function is as follows. May play a key role in the regulation of the intracellular concentration of adenosylhomocysteine. The sequence is that of Adenosylhomocysteinase from Rhodopseudomonas palustris (strain TIE-1).